The chain runs to 746 residues: H(+)/Cl(-) exchange transporter 5 (746 aa).

At 1 to 54 (MDFLEEPIPGVGTYDDFNTIDWVREKSRDRDRHREITNRSKESTWALIHSVSDA) the chain is on the cytoplasmic side. Helical transmembrane passes span 55–92 (FSGW…ICTE) and 138–161 (VNYF…VKVF). The Selectivity filter part_1 signature appears at 167-171 (GSGIP). Residue Ser168 coordinates chloride. An intramembrane region (helical) is located at residues 170–177 (IPEIKTIL). A run of 2 helical transmembrane segments spans residues 186–205 (LGKW…VSSG) and 211–230 (EGPL…HCFN). The short motif at 209-213 (GKEGP) is the Selectivity filter part_2 element. Intramembrane regions (helical) lie at residues 242 to 254 (VLSA…VSVA) and 258 to 266 (PIGGVLFSL). 5 consecutive transmembrane segments (helical) span residues 278–296 (LWRS…RSIN), 319–344 (LVPF…IAWC), 352–372 (LGKY…ILAF), 428–448 (MWQL…TFGM), and 453–472 (GLFI…LGVG). The Selectivity filter part_3 motif lies at 453–457 (GLFIP). Residue Phe455 participates in chloride binding. The helical intramembrane region spans 500–514 (GLYAMVGAAACLGGV). Positions 515-517 (TRM) form an intramembrane region, note=Loop between two helices. An intramembrane region (helical) is located at residues 518–529 (TVSLVVIMFELT). Residues 530–534 (GGLEY) constitute an intramembrane region (note=Loop between two helices). The helical transmembrane segment at 535–552 (IVPLMAAAMTSKWVADAL) threads the bilayer. The Cytoplasmic portion of the chain corresponds to 553 to 746 (GREGIYDAHI…NQDPDSILFN (194 aa)). A chloride-binding site is contributed by Tyr558. 2 CBS domains span residues 586–650 (MKPR…ARKE) and 682–742 (ILDL…DPDS). Residues Thr596, 617-619 (YSG), and 724-727 (TKKD) contribute to the ATP site.

It belongs to the chloride channel (TC 2.A.49) family. ClC-5/CLCN5 subfamily. As to quaternary structure, interacts with NEDD4 and NEDD4L. In terms of processing, ubiquitinated by NEDD4L in the presence of albumin; which promotes endocytosis and proteasomal degradation. In terms of tissue distribution, detected in duodenum, jejunum and ileum. Detected in crypt and villus regions of the epithelium of the small intestine.

The protein resides in the golgi apparatus membrane. It localises to the endosome membrane. It is found in the cell membrane. The catalysed reaction is 2 chloride(in) + H(+)(out) = 2 chloride(out) + H(+)(in). Functionally, proton-coupled chloride transporter. Functions as antiport system and exchanges chloride ions against protons. Important for normal acidification of the endosome lumen. May play an important role in renal tubular function. The CLC channel family contains both chloride channels and proton-coupled anion transporters that exchange chloride or another anion for protons. The absence of conserved gating glutamate residues is typical for family members that function as channels. This is H(+)/Cl(-) exchange transporter 5 (CLCN5) from Cavia porcellus (Guinea pig).